A 41-amino-acid chain; its full sequence is Pi-stichotoxin-Hmg5c (41 aa).

Disulfide bonds link C4–C37, C6–C30, and C20–C38.

Belongs to the sea anemone type 3 (BDS) potassium channel toxin family.

Its subcellular location is the secreted. The protein resides in the nematocyst. In terms of biological role, toxin with different activities on acid-sensing ion channels (ASIC) and nicotinic acetylcholine receptors. Is able to bind T.californica muscle-type nicotinic acetylcholine receptors (nAChR) (alpha-1-beta-1-delta-epsilon (CHRNA1-CHRNB1-CHRND-CHRNE)), and human alpha-7/CHRNA7 nicotinic acetylcholine receptors. Weakly and reversibly inhibits rat homomeric ASIC1 (isoform ASIC1a) (IC(50)=1.25 uM), while it potentiates rat homomeric ASIC3 (EC(50)=1.53 uM). Rat ASIC1a current inhibition is not complete, and reaches a maximum of 86% inhibition. On rat ASIC3, does not activate the channel itself, but produces a remarkable potentiation of the transient current resulting from the acidic pulse. At the maximal applied concentration, elicits responses that are twice as high as those produced by extracellular protons. Surprisingly, shows a different activity on human ASIC3. On the truncated human ASIC3 (ASIC3-D20), the toxin weakly inhibits the channel. Molecular modeling interaction with rat ASIC1a suggests that it hinders the collapse of acidic pockets and stabilizes nonconducting channels state. In vivo, causes an anxiolytic effect on mouse behavior. Also shows an analgesic activity in an acid-induced muscle pain model, and important anti-inflammatory effect in models of acute local inflammation. This chain is Pi-stichotoxin-Hmg5c, found in Heteractis magnifica (Magnificent sea anemone).